The following is a 235-amino-acid chain: Glucosamine-6-phosphate deaminase (235 aa).

Aspartate 62 serves as the catalytic Proton acceptor; for enolization step. Asparagine 128 functions as the For ring-opening step in the catalytic mechanism. Histidine 130 serves as the catalytic Proton acceptor; for ring-opening step. The For ring-opening step role is filled by glutamate 135.

It belongs to the glucosamine/galactosamine-6-phosphate isomerase family. NagB subfamily.

The enzyme catalyses alpha-D-glucosamine 6-phosphate + H2O = beta-D-fructose 6-phosphate + NH4(+). Its pathway is amino-sugar metabolism; N-acetylneuraminate degradation; D-fructose 6-phosphate from N-acetylneuraminate: step 5/5. Its function is as follows. Catalyzes the reversible isomerization-deamination of glucosamine 6-phosphate (GlcN6P) to form fructose 6-phosphate (Fru6P) and ammonium ion. The chain is Glucosamine-6-phosphate deaminase from Latilactobacillus sakei subsp. sakei (strain 23K) (Lactobacillus sakei subsp. sakei).